Reading from the N-terminus, the 709-residue chain is Polyribonucleotide nucleotidyltransferase (709 aa).

Residues Asp485 and Asp491 each contribute to the Mg(2+) site. The KH domain maps to 552–611; it reads PRIYTMKIDPKKIKDVIGKGGATIRSLTEETGTSIDIDDDGTVKIAAVDSNAAKNVMGRI. One can recognise an S1 motif domain in the interval 621–689; that stretch reads GAIYKGKVTR…RQGRIRLTMK (69 aa).

Belongs to the polyribonucleotide nucleotidyltransferase family. Component of the RNA degradosome, which is a multiprotein complex involved in RNA processing and mRNA degradation. Mg(2+) is required as a cofactor.

Its subcellular location is the cytoplasm. It carries out the reaction RNA(n+1) + phosphate = RNA(n) + a ribonucleoside 5'-diphosphate. Functionally, involved in mRNA degradation. Catalyzes the phosphorolysis of single-stranded polyribonucleotides processively in the 3'- to 5'-direction. This is Polyribonucleotide nucleotidyltransferase from Haemophilus influenzae (strain PittEE).